The primary structure comprises 209 residues: Ribosomal RNA large subunit methyltransferase E (209 aa).

S-adenosyl-L-methionine contacts are provided by glycine 63, tryptophan 65, aspartate 83, aspartate 99, and aspartate 124. Residue lysine 164 is the Proton acceptor of the active site.

Belongs to the class I-like SAM-binding methyltransferase superfamily. RNA methyltransferase RlmE family.

It is found in the cytoplasm. It catalyses the reaction uridine(2552) in 23S rRNA + S-adenosyl-L-methionine = 2'-O-methyluridine(2552) in 23S rRNA + S-adenosyl-L-homocysteine + H(+). Functionally, specifically methylates the uridine in position 2552 of 23S rRNA at the 2'-O position of the ribose in the fully assembled 50S ribosomal subunit. The chain is Ribosomal RNA large subunit methyltransferase E from Shewanella piezotolerans (strain WP3 / JCM 13877).